Reading from the N-terminus, the 496-residue chain is Cytochrome P450 71B12 (496 aa).

The helical transmembrane segment at 2-22 threads the bilayer; sequence SLWYIIVAFVFFSSMIIVRII. Heme is bound at residue C436.

This sequence belongs to the cytochrome P450 family. Heme is required as a cofactor.

Its subcellular location is the membrane. This chain is Cytochrome P450 71B12 (CYP71B12), found in Arabidopsis thaliana (Mouse-ear cress).